The following is an 854-amino-acid chain: Aryl hydrocarbon receptor (854 aa).

The propeptide occupies 1 to 9 (MSSGANITY). A disordered region spans residues 1-38 (MSSGANITYASRKRRKPVQKTVKPIPAEGIKSNPSKRH). 2 short sequence motifs (nuclear localization signal) span residues 12–15 (RKRR) and 36–41 (KRHRDR). Residues 26–79 (PAEGIKSNPSKRHRDRLNTELDRLASLLPFPQDVINKLDKLSVLRLSVSYLRAK) enclose the bHLH domain. Residues 37–65 (RHRDRLNTELDRLASLLPFPQDVINKLDK) are DNA-binding. 3 required for maintaining the overall integrity of the AHR:ARNT heterodimer and its transcriptional activity regions span residues 49 to 81 (LASLLPFPQDVINKLDKLSVLRLSVSYLRAKSF), 116 to 124 (LLQALNGFV), and 264 to 266 (FAI). The Nuclear export signal motif lies at 63-71 (LDKLSVLRL). The PAS 1 domain occupies 111–175 (QEGEFLLQAL…AEFQRQLHWA (65 aa)). In terms of domain architecture, PAS 2 spans 270-340 (LQPPSILEIR…CAESHIRMIK (71 aa)). The PAC domain maps to 346–387 (MTVFRLLAKHSRWRWVQSNARLIYRNGRPDYIIATQRPLTDE). Residues 425–452 (LPIRTKSNTSRKDWAPQSTPSKDSFHPS) form a disordered region. A compositionally biased stretch (polar residues) spans 440 to 452 (PQSTPSKDSFHPS).

Homodimer. Heterodimer; efficient DNA binding requires dimerization with another bHLH protein. Interacts with ARNT; the heterodimer ARNT:AHR binds to core DNA sequence 5'-TGCGTG-3' within the dioxin response element (DRE) of target gene promoters and activates their transcription. Binds MYBBP1A. Interacts with coactivators including SRC-1, RIP140 and NOCA7, and with the corepressor SMRT. Interacts with NEDD8 and IVNS1ABP. Interacts with BMAL1. Interacts with HSP90AB1. Interacts with TIPARP; leading to mono-ADP-ribosylation of AHR and subsequent inhibition of AHR. Mono-ADP-ribosylated, leading to inhibit transcription activator activity of AHR.

Its subcellular location is the cytoplasm. It is found in the nucleus. In terms of biological role, ligand-activated transcription factor that enables cells to adapt to changing conditions by sensing compounds from the environment, diet, microbiome and cellular metabolism, and which plays important roles in development, immunity and cancer. Upon ligand binding, translocates into the nucleus, where it heterodimerizes with ARNT and induces transcription by binding to xenobiotic response elements (XRE). Regulates a variety of biological processes, including angiogenesis, hematopoiesis, drug and lipid metabolism, cell motility and immune modulation. Xenobiotics can act as ligands: upon xenobiotic-binding, activates the expression of multiple phase I and II xenobiotic chemical metabolizing enzyme genes (such as the CYP1A1 gene). Mediates biochemical and toxic effects of halogenated aromatic hydrocarbons. Next to xenobiotics, natural ligands derived from plants, microbiota, and endogenous metabolism are potent AHR agonists. Tryptophan (Trp) derivatives constitute an important class of endogenous AHR ligands. Acts as a negative regulator of anti-tumor immunity: indoles and kynurenic acid generated by Trp catabolism act as ligand and activate AHR, thereby promoting AHR-driven cancer cell motility and suppressing adaptive immunity. Regulates the circadian clock by inhibiting the basal and circadian expression of the core circadian component PER1. Inhibits PER1 by repressing the CLOCK-BMAL1 heterodimer mediated transcriptional activation of PER1. The heterodimer ARNT:AHR binds to core DNA sequence 5'-TGCGTG-3' within the dioxin response element (DRE) of target gene promoters and activates their transcription. The polypeptide is Aryl hydrocarbon receptor (Ahr) (Mus spretus (Western Mediterranean mouse)).